The following is a 396-amino-acid chain: Phosphoglycerate kinase (396 aa).

Substrate-binding positions include 21-23 (DFN), arginine 37, 60-63 (HLGR), arginine 121, and arginine 154. ATP contacts are provided by residues lysine 205, glycine 296, glutamate 327, and 353 to 356 (GGDS).

This sequence belongs to the phosphoglycerate kinase family. Monomer.

It is found in the cytoplasm. The enzyme catalyses (2R)-3-phosphoglycerate + ATP = (2R)-3-phospho-glyceroyl phosphate + ADP. It functions in the pathway carbohydrate degradation; glycolysis; pyruvate from D-glyceraldehyde 3-phosphate: step 2/5. In Anaeromyxobacter dehalogenans (strain 2CP-C), this protein is Phosphoglycerate kinase.